The chain runs to 710 residues: Polyribonucleotide nucleotidyltransferase (710 aa).

Mg(2+) contacts are provided by aspartate 486 and aspartate 492. One can recognise a KH domain in the interval proline 553 to isoleucine 612. An S1 motif domain is found at glycine 622–lysine 690. The segment at lysine 690–glutamate 710 is disordered. Residues glutamate 694–glutamate 710 are compositionally biased toward low complexity.

The protein belongs to the polyribonucleotide nucleotidyltransferase family. Component of the RNA degradosome, which is a multiprotein complex involved in RNA processing and mRNA degradation. Mg(2+) is required as a cofactor.

The protein resides in the cytoplasm. The enzyme catalyses RNA(n+1) + phosphate = RNA(n) + a ribonucleoside 5'-diphosphate. Functionally, involved in mRNA degradation. Catalyzes the phosphorolysis of single-stranded polyribonucleotides processively in the 3'- to 5'-direction. In Erwinia tasmaniensis (strain DSM 17950 / CFBP 7177 / CIP 109463 / NCPPB 4357 / Et1/99), this protein is Polyribonucleotide nucleotidyltransferase.